The primary structure comprises 93 residues: Large ribosomal subunit protein eL29 (93 aa).

The segment covering 1-31 has biased composition (basic residues); sequence MAKSKNHSTHHKNRKDHRNGIKKAVVHKKTS. A disordered region spans residues 1 to 33; that stretch reads MAKSKNHSTHHKNRKDHRNGIKKAVVHKKTSSK.

Belongs to the eukaryotic ribosomal protein eL29 family.

In Dictyostelium discoideum (Social amoeba), this protein is Large ribosomal subunit protein eL29 (rpl29).